The sequence spans 398 residues: 2,3,4,5-tetrahydropyridine-2,6-dicarboxylate N-succinyltransferase (398 aa).

Glu268 serves as the catalytic Acyl-anhydride intermediate. Succinyl-CoA is bound by residues Arg270, Gly285, Ser288, Ala311, 326–327, Gly334, Lys361, and 374–377; these read DG and RQNS.

This sequence belongs to the type 2 tetrahydrodipicolinate N-succinyltransferase family. Homotrimer.

The protein localises to the cytoplasm. The enzyme catalyses (S)-2,3,4,5-tetrahydrodipicolinate + succinyl-CoA + H2O = (S)-2-succinylamino-6-oxoheptanedioate + CoA. It functions in the pathway amino-acid biosynthesis; L-lysine biosynthesis via DAP pathway; LL-2,6-diaminopimelate from (S)-tetrahydrodipicolinate (succinylase route): step 1/3. In terms of biological role, catalyzes the conversion of the cyclic tetrahydrodipicolinate (THDP) into the acyclic N-succinyl-L-2-amino-6-oxopimelate using succinyl-CoA. This chain is 2,3,4,5-tetrahydropyridine-2,6-dicarboxylate N-succinyltransferase, found in Sulfurimonas denitrificans (strain ATCC 33889 / DSM 1251) (Thiomicrospira denitrificans (strain ATCC 33889 / DSM 1251)).